Here is a 508-residue protein sequence, read N- to C-terminus: Ribonuclease Y (508 aa).

The KH domain maps to 198–264 (TVSVINLPND…RLTIEKLITD (67 aa)). Positions 324-417 (VLTHSIEVAK…VQAADAVSAS (94 aa)) constitute an HD domain.

This sequence belongs to the RNase Y family.

Functionally, endoribonuclease that initiates mRNA decay. In Fusobacterium nucleatum subsp. nucleatum (strain ATCC 25586 / DSM 15643 / BCRC 10681 / CIP 101130 / JCM 8532 / KCTC 2640 / LMG 13131 / VPI 4355), this protein is Ribonuclease Y.